Here is an 858-residue protein sequence, read N- to C-terminus: RNA-directed RNA polymerase 2a (858 aa).

The 114-residue stretch at 511 to 624 folds into the RdRp catalytic domain; that stretch reads KYCLEIDLSK…FSVLPPVGDP (114 aa). Residues 775 to 830 are disordered; the sequence is RKKKDGIERRRNDKRRTPTSPHGGGEETETKVSQEESTGTMLQKSQRESAFKSQTI. The span at 798-808 shows a compositional bias: basic and acidic residues; that stretch reads GGEETETKVSQ. The segment covering 809-818 has biased composition (polar residues); that stretch reads EESTGTMLQK.

This sequence belongs to the ssRNA positive-strand viruses RNA-directed RNA polymerase family. In terms of assembly, interacts with replication protein 1a.

It carries out the reaction RNA(n) + a ribonucleoside 5'-triphosphate = RNA(n+1) + diphosphate. Its function is as follows. RNA-dependent RNA polymerase which replicates the viral genome composed of 3 RNA segments, RNA1, RNA2 and RNA3. The protein is RNA-directed RNA polymerase 2a of Cucumber mosaic virus (strain Ixora) (CMV).